A 309-amino-acid chain; its full sequence is Glutaminase (309 aa).

Substrate is bound by residues S64, N114, E160, N167, Y191, Y243, and V261.

The protein belongs to the glutaminase family. As to quaternary structure, homotetramer.

The enzyme catalyses L-glutamine + H2O = L-glutamate + NH4(+). The sequence is that of Glutaminase from Rhizobium leguminosarum bv. trifolii (strain WSM2304).